The following is a 1400-amino-acid chain: MVSKTDDIPASVPNCSPADFARDGETANSKGTTSKKEASCACGHGVETAVMNGDAGHDQAEEADSKQDGSGDADQAEDANEQEVIVIQDTGFTVKIQAPGTEPFDLQVSPQEMVQEIHQVLMDREDTCHRTCFSLQLDGNVLDNFAELKSIEGLQEGSLLKVVEEPYTVREARIHVRHIRDLLKSLDPSDAYNGVDCNSLSFLSVFSEGDLGDTGKRKKKGSELEQIDCTPPEHILPGSKERPLVPLQPQNKDWKPMQCLKVLTMSSWNPPPGNRKMHGDLMYLYIVTVEDRHVSITASTRGFYLNQSTTYNFSPKPANPSFLSHSLVELLSQISAAFKKNFTTLQKKRVQRHPFERIATPFQVYSWTAPQIDHAMDCVRAEDAYTSRLGYEEHIPGQTRDWNEELQTTRELSRKNLPERLLRERAIFKVHSDFAAAATRGAMAVIDGNVMAINPGEETRMQMFIWNNIFFSLGFDVRDHYRELGGDSAAHAAPTNDLNGVRAYSAVDVEGLYTLGTVVVDYRGYRVTAQSIIPGILEREQEQSVIYGSIDFGKTVVSHPKYLELLEKTSRPLKVQRHAVLNEKDSAVELCSSVECKGIIGNDGRHYILDLLRTFPPDLNFLPVEGEELTPESQKLGFPRQHRHRLACLRQELIEAFVEHRYLLFMKMAALQLMQQKANKDKTAALQDSNAAGAGSENKPLALESCDGTPDSPTSSESTLTPEDSEATTVSENSSAENQEAMTEVPVASINGTHEPLAAERQNGGCDGPLEGKEADENIPGLAQAKELAESLAAEDGSGIDPKSREVVLNACKAVGSISNTSFDIRFNPDIFSPGVRFPDDSNDDIKKQKQLLKDAAAFLVSCQIPSLVKDCLDHSSLPMDGATLTEALHQRGINVRYLGTVLEFMDNMPAKAQLEHIYRIGISELITRCAKHIFKTYLQGVDLSALSAAVSYFLNCLLSSFPDAVAHLPADELVSRKKSRKRRNRVPGGGDNTAWASLTPSELWKNITSEAHGYYNFSLQCESVDQAVEKYGLQKITLLREISIKTGIQILIKEYNFDSRHKPAFTEEDILNIFPVVKHVNPKASDAFHFFQSGQAKVQQGFLKEGCELINEALNLFNNVYGAMHVEICACLRLLARLNYIMGDHPEALSNQQKAVLMSERVLGIEHPNTIQEYMHLALYCFANGQLSTALKLLYRARYLMLVVCGEDHPEMALLDSNIGLVLHGVMEYDLSLRFLENALAINTKYHGPRSLKVALSHHLVARVYESKAEFRSALQHEKEGYTIYKNQVGEAHEKTKESSEYLKYLTQQAVALQRTMNEIYKNGSNASIMPLKFTAPSMASVLEQLNIINGIIFIPLSQKDLENLKAEVQRRQLMQDSGKIQEQQGSHLELDDKLPVDD.

3 disordered regions span residues 1 to 39, 56 to 78, and 212 to 243; these read MVSKTDDIPASVPNCSPADFARDGETANSKGTTSKKEAS, GHDQAEEADSKQDGSGDADQAED, and GDTGKRKKKGSELEQIDCTPPEHILPGSKERP. Residues 56 to 69 show a composition bias toward basic and acidic residues; it reads GHDQAEEADSKQDG. Positions 380-622 constitute a Clu domain; the sequence is RAEDAYTSRL…RTFPPDLNFL (243 aa). The interval 684-741 is disordered; that stretch reads AALQDSNAAGAGSENKPLALESCDGTPDSPTSSESTLTPEDSEATTVSENSSAENQEA. Residues 707 to 722 are compositionally biased toward low complexity; that stretch reads DGTPDSPTSSESTLTP. Residues 727 to 741 show a composition bias toward polar residues; sequence ATTVSENSSAENQEA. 4 TPR repeats span residues 1088–1121, 1130–1163, 1172–1205, and 1214–1247; these read AFHFFQSGQAKVQQGFLKEGCELINEALNLFNNV, CACLRLLARLNYIMGDHPEALSNQQKAVLMSERV, IQEYMHLALYCFANGQLSTALKLLYRARYLMLVV, and ALLDSNIGLVLHGVMEYDLSLRFLENALAINTKY. The span at 1377–1388 shows a compositional bias: polar residues; the sequence is QDSGKIQEQQGS. The interval 1377–1400 is disordered; the sequence is QDSGKIQEQQGSHLELDDKLPVDD. Over residues 1390 to 1400 the composition is skewed to basic and acidic residues; sequence LELDDKLPVDD.

The protein belongs to the CLU family.

The protein localises to the cytoplasm. Functionally, mRNA-binding protein involved in proper cytoplasmic distribution of mitochondria. The sequence is that of Clustered mitochondria protein homolog from Danio rerio (Zebrafish).